The chain runs to 238 residues: Complement C1q-like protein 4 (238 aa).

Positions 1 to 15 (MVLLLLVAIPLLVHS) are cleaved as a signal peptide. The tract at residues 37–102 (SRGQGPDGAP…PGPGPGGAAP (66 aa)) is disordered. One can recognise a Collagen-like domain in the interval 53-96 (PPGAKGEVGRRGKAGLRGPPGPPGPRGPPGEPGRPGPPGPPGPG). Residues 71–96 (PPGPPGPRGPPGEPGRPGPPGPPGPG) are compositionally biased toward pro residues. Residues 105–238 (GYVPRIAFYA…TFSGFIIYPD (134 aa)) form the C1q domain.

As to quaternary structure, forms homooligomers, predominantly dimers or trimers. Forms heterooligomers with C1QL1, C1QL2 and C1QL3, when proteins are coexpressed; this interaction does not occur after secretion. Interacts with ADGRB3. Highly expressed in testis and adipose tissue, brown adipose tissue expressing higher levels than subcutaneous and visceral white adipose tissue. In gonadal fat pad, expressed at lower levels in adipocytes than in the stromal vascular fraction (VSP), which contains preadipocytes, fibroblasts, endothelial cells and occasional immune cells. Expression exhibits sexually dimorphism, with higher levels in females than in males.

The protein resides in the secreted. Its function is as follows. May regulate the number of excitatory synapses that are formed on hippocampus neurons. Has no effect on inhibitory synapses. May inhibit adipocyte differentiation at an early stage of the process. The chain is Complement C1q-like protein 4 (C1ql4) from Mus musculus (Mouse).